Consider the following 255-residue polypeptide: Hydroxyacylglutathione hydrolase (255 aa).

Zn(2+)-binding residues include His52, His54, Asp56, His57, His108, Asp130, and His168.

This sequence belongs to the metallo-beta-lactamase superfamily. Glyoxalase II family. Monomer. Zn(2+) serves as cofactor.

It catalyses the reaction an S-(2-hydroxyacyl)glutathione + H2O = a 2-hydroxy carboxylate + glutathione + H(+). Its pathway is secondary metabolite metabolism; methylglyoxal degradation; (R)-lactate from methylglyoxal: step 2/2. Thiolesterase that catalyzes the hydrolysis of S-D-lactoyl-glutathione to form glutathione and D-lactic acid. This Albidiferax ferrireducens (strain ATCC BAA-621 / DSM 15236 / T118) (Rhodoferax ferrireducens) protein is Hydroxyacylglutathione hydrolase.